A 278-amino-acid chain; its full sequence is MAIIKYKPTTNGRRNMTSSDFAEITKKKPEKTLLESQSHTAGRNSYGHITVRHRGGGHKQKYRIIDFKRNKDDVKAVVKAIEYDPNRTANIALLHYTDGIKAYILAPKGLKVGAVVESGPDADIKPGNALPLSAIPAGTEIHNIELKPGKGGQLVRSAGTVAQVLGNDGKYTLVRLQSGEVRKILSTCRATIGSVGNEQHSLIQLGKAGRSRWLGKRPQSRGSVMNPNDHPHGGGEGKAPVGRPQPMTPWGKKSRGIKTRNSKARSEKLIIRHRKGNK.

Basic residues-rich tracts occupy residues 210-219 and 252-263; these read RSRWLGKRPQ and KKSRGIKTRNSK. A disordered region spans residues 210-278; sequence RSRWLGKRPQ…LIIRHRKGNK (69 aa).

Belongs to the universal ribosomal protein uL2 family. In terms of assembly, part of the 50S ribosomal subunit. Forms a bridge to the 30S subunit in the 70S ribosome.

Its function is as follows. One of the primary rRNA binding proteins. Required for association of the 30S and 50S subunits to form the 70S ribosome, for tRNA binding and peptide bond formation. It has been suggested to have peptidyltransferase activity; this is somewhat controversial. Makes several contacts with the 16S rRNA in the 70S ribosome. The sequence is that of Large ribosomal subunit protein uL2 from Lactobacillus johnsonii (strain CNCM I-12250 / La1 / NCC 533).